Consider the following 3187-residue polypeptide: Cilia- and flagella-associated protein 47 (3187 aa).

One can recognise a Calponin-homology (CH) domain in the interval 1746–1869; it reads SDSERILLSW…LCVYMYERLP (124 aa). Residues 2024 to 2052 are disordered; sequence KLTESRQYPKHDDDMSSSGSDTDQGCSDS. A compositionally biased stretch (basic and acidic residues) spans 2026–2037; that stretch reads TESRQYPKHDDD.

In terms of assembly, interacts with CFAP65. In terms of tissue distribution, highly expressed in spermatzoa (at protein level).

The protein resides in the cytoplasm. It localises to the cytoskeleton. The protein localises to the flagellum basal body. Functionally, plays a role in flagellar formation and sperm motility. This is Cilia- and flagella-associated protein 47 from Homo sapiens (Human).